The sequence spans 662 residues: DNA ligase (662 aa).

NAD(+) is bound by residues 34–38, 83–84, and glutamate 113; these read DYDYD and SI. The active-site N6-AMP-lysine intermediate is the lysine 115. NAD(+) contacts are provided by arginine 136, glutamate 172, lysine 286, and lysine 310. Zn(2+) contacts are provided by cysteine 404, cysteine 407, cysteine 422, and cysteine 427. Residues 583-662 enclose the BRCT domain; the sequence is RASASCQGKT…SDLLKILYPN (80 aa).

Belongs to the NAD-dependent DNA ligase family. LigA subfamily. The cofactor is Mg(2+). Requires Mn(2+) as cofactor.

The enzyme catalyses NAD(+) + (deoxyribonucleotide)n-3'-hydroxyl + 5'-phospho-(deoxyribonucleotide)m = (deoxyribonucleotide)n+m + AMP + beta-nicotinamide D-nucleotide.. Its function is as follows. DNA ligase that catalyzes the formation of phosphodiester linkages between 5'-phosphoryl and 3'-hydroxyl groups in double-stranded DNA using NAD as a coenzyme and as the energy source for the reaction. It is essential for DNA replication and repair of damaged DNA. This Chlamydia felis (strain Fe/C-56) (Chlamydophila felis) protein is DNA ligase.